Reading from the N-terminus, the 130-residue chain is Small ribosomal subunit protein uS11 (130 aa).

The protein belongs to the universal ribosomal protein uS11 family. Part of the 30S ribosomal subunit. Interacts with proteins S7 and S18. Binds to IF-3.

Its function is as follows. Located on the platform of the 30S subunit, it bridges several disparate RNA helices of the 16S rRNA. Forms part of the Shine-Dalgarno cleft in the 70S ribosome. The protein is Small ribosomal subunit protein uS11 of Gluconacetobacter diazotrophicus (strain ATCC 49037 / DSM 5601 / CCUG 37298 / CIP 103539 / LMG 7603 / PAl5).